Here is a 333-residue protein sequence, read N- to C-terminus: Ribosomal RNA small subunit methyltransferase C (333 aa).

This sequence belongs to the methyltransferase superfamily. RsmC family. As to quaternary structure, monomer.

The protein localises to the cytoplasm. It carries out the reaction guanosine(1207) in 16S rRNA + S-adenosyl-L-methionine = N(2)-methylguanosine(1207) in 16S rRNA + S-adenosyl-L-homocysteine + H(+). In terms of biological role, specifically methylates the guanine in position 1207 of 16S rRNA in the 30S particle. In Actinobacillus succinogenes (strain ATCC 55618 / DSM 22257 / CCUG 43843 / 130Z), this protein is Ribosomal RNA small subunit methyltransferase C.